The sequence spans 266 residues: Proliferating cell nuclear antigen (266 aa).

The DNA-binding element occupies 61–80 (RCDRNLSMGMNLNNMAKMLK).

Belongs to the PCNA family.

Its subcellular location is the nucleus. In terms of biological role, this protein is an auxiliary protein of DNA polymerase delta and is involved in the control of eukaryotic DNA replication by increasing the polymerase's processibility during elongation of the leading strand. The protein is Proliferating cell nuclear antigen (PCNA) of Pisum sativum (Garden pea).